The sequence spans 260 residues: Shikimate dehydrogenase (NADP(+)) (260 aa).

Shikimate-binding positions include 14–16 (SAS) and threonine 60. Residue lysine 64 is the Proton acceptor of the active site. Asparagine 85 and aspartate 100 together coordinate shikimate. Residues 121–125 (GAGGA), 145–150 (NRTYER), and phenylalanine 201 contribute to the NADP(+) site. Tyrosine 203 contributes to the shikimate binding site. Residue glycine 225 participates in NADP(+) binding.

Belongs to the shikimate dehydrogenase family. As to quaternary structure, homodimer.

The catalysed reaction is shikimate + NADP(+) = 3-dehydroshikimate + NADPH + H(+). It participates in metabolic intermediate biosynthesis; chorismate biosynthesis; chorismate from D-erythrose 4-phosphate and phosphoenolpyruvate: step 4/7. Involved in the biosynthesis of the chorismate, which leads to the biosynthesis of aromatic amino acids. Catalyzes the reversible NADPH linked reduction of 3-dehydroshikimate (DHSA) to yield shikimate (SA). This chain is Shikimate dehydrogenase (NADP(+)), found in Pyrobaculum neutrophilum (strain DSM 2338 / JCM 9278 / NBRC 100436 / V24Sta) (Thermoproteus neutrophilus).